Consider the following 165-residue polypeptide: Fibrinogen-binding protein (165 aa).

The first 29 residues, Met1–Ala29, serve as a signal peptide directing secretion.

In terms of assembly, interacts with host fibrinogen alpha chain/FGA. Interacts with host complement protein C3.

It localises to the secreted. In terms of biological role, extracellular fibrinogen-binding protein that plays an important role in virulence. By interacting with the alpha chain of fibrinogen and its derivative fibrin, enhances a non-functional interaction between fibrinogen and platelets and is responsible for repression of fibrinogen-dependent platelet aggregation. In addition, assembles a fibrinogen protective shield around the bacteria which results in impaired phagocytic clearance by the host. Mechanistically, interacts with host complement C3b deposited on the surface of the bacterium via its C-terminal and then recruits fibrinogen via its N-terminal. The protein is Fibrinogen-binding protein (fib) of Staphylococcus aureus (strain Newman).